Consider the following 370-residue polypeptide: Thiamine-repressible mitochondrial transport protein THI74 (370 aa).

Over 1 to 10 (MNRVGIDVDH) the chain is Cytoplasmic. Residues 11–31 (MIGVLLLAVVVVFWVGASCLT) form a helical membrane-spanning segment. Over 32-42 (NELLETNAYNK) the chain is Mitochondrial intermembrane. Residues 43–63 (PFFLTYLNISSFALYLTPDLW) form a helical membrane-spanning segment. Topologically, residues 64–119 (RIIQSRRKSLQERTERTLPIHTQESFSEFLPLLSSTPSTSSNLSSIADTKVKDTMR) are cytoplasmic. The helical transmembrane segment at 120–140 (LSLLFCVLWFVANLAANAALS) threads the bilayer. One can recognise an EamA domain in the interval 129 to 190 (FVANLAANAA…SLFGIILIVM (62 aa)). Topologically, residues 141 to 146 (YTTVAS) are mitochondrial intermembrane. A helical transmembrane segment spans residues 147–167 (STILSSTSSFFTLFLATSLGI). The Cytoplasmic segment spans residues 168 to 169 (ET). The chain crosses the membrane as a helical span at residues 170–190 (FSTKKLLGLFVSLFGIILIVM). Residues 191 to 203 (QSSKQQDSVSASS) are Mitochondrial intermembrane-facing. A helical membrane pass occupies residues 204–224 (FLVGNTLALLGSLGYSVYTTL). The Cytoplasmic segment spans residues 225 to 239 (LKYEISSKGLRLDIQ). Residues 240–260 (MFLGYVGIFTFLLFWPILIIL) traverse the membrane as a helical segment. The Mitochondrial intermembrane segment spans residues 261 to 273 (DITHMETFELPSN). A helical membrane pass occupies residues 274 to 294 (FHISFLVMLNCIIIFVSDYFW). Residues 295-303 (CKALILTSP) are Cytoplasmic-facing. Residues 304-324 (LVVTVALTFTIPLAMFADFVW) traverse the membrane as a helical segment. The Mitochondrial intermembrane portion of the chain corresponds to 325–326 (RE). The chain crosses the membrane as a helical span at residues 327–347 (AFFTPWYIIGVIFIFVSFFLV). Residues 348–370 (NHRGESAVEKDCAAVEKGPILDA) lie on the Cytoplasmic side of the membrane.

Its subcellular location is the mitochondrion membrane. In terms of biological role, may be involved in thiaminediphosphate transport across the mitochondrial membrane. This is Thiamine-repressible mitochondrial transport protein THI74 (THI74) from Saccharomyces cerevisiae (strain ATCC 204508 / S288c) (Baker's yeast).